The chain runs to 352 residues: Quinolinate synthase (352 aa).

2 residues coordinate iminosuccinate: H48 and S69. A [4Fe-4S] cluster-binding site is contributed by C114. Residues 140 to 142 (YAN) and S157 contribute to the iminosuccinate site. C201 provides a ligand contact to [4Fe-4S] cluster. Iminosuccinate is bound by residues 227–229 (HPE) and T244. C298 is a [4Fe-4S] cluster binding site.

The protein belongs to the quinolinate synthase family. Type 1 subfamily. The cofactor is [4Fe-4S] cluster.

The protein resides in the cytoplasm. It catalyses the reaction iminosuccinate + dihydroxyacetone phosphate = quinolinate + phosphate + 2 H2O + H(+). The protein operates within cofactor biosynthesis; NAD(+) biosynthesis; quinolinate from iminoaspartate: step 1/1. Its function is as follows. Catalyzes the condensation of iminoaspartate with dihydroxyacetone phosphate to form quinolinate. The polypeptide is Quinolinate synthase (Pseudomonas putida (strain ATCC 700007 / DSM 6899 / JCM 31910 / BCRC 17059 / LMG 24140 / F1)).